A 311-amino-acid chain; its full sequence is Pyrimidine-specific ribonucleoside hydrolase RihA (311 aa).

Histidine 240 is an active-site residue.

The protein belongs to the IUNH family. RihA subfamily.

Functionally, hydrolyzes cytidine or uridine to ribose and cytosine or uracil, respectively. This chain is Pyrimidine-specific ribonucleoside hydrolase RihA, found in Salmonella gallinarum (strain 287/91 / NCTC 13346).